We begin with the raw amino-acid sequence, 1347 residues long: MARQPPPPWVHAAFLLCLLSLGGAIEIPMDPSIQNELTQPPTITKQSAKDHIVDPRDNILIECEAKGNPAPSFHWTRNSRFFNIAKDPRVSMRRRSGTLVIDFRSGGRPEEYEGEYQCFARNKFGTALSNRIRLQVSKSPLWPKENLDPVVVQEGAPLTLQCNPPPGLPSPVIFWMSSSMEPITQDKRVSQGHNGDLYFSNVMLQDMQTDYSCNARFHFTHTIQQKNPFTLKVLTTRGVAERTPSFMYPQGTASSQMVLRGMDLLLECIASGVPTPDIAWYKKGGDLPSDKAKFENFNKALRITNVSEEDSGEYFCLASNKMGSIRHTISVRVKAAPYWLDEPKNLILAPGEDGRLVCRANGNPKPTVQWMVNGEPLQSAPPNPNREVAGDTIIFRDTQISSRAVYQCNTSNEHGYLLANAFVSVLDVPPRMLSPRNQLIRVILYNRTRLDCPFFGSPIPTLRWFKNGQGSNLDGGNYHVYENGSLEIKMIRKEDQGIYTCVATNILGKAENQVRLEVKDPTRIYRMPEDQVARRGTTVQLECRVKHDPSLKLTVSWLKDDEPLYIGNRMKKEDDSLTIFGVAERDQGSYTCVASTELDQDLAKAYLTVLADQATPTNRLAALPKGRPDRPRDLELTDLAERSVRLTWIPGDANNSPITDYVVQFEEDQFQPGVWHDHSKYPGSVNSAVLRLSPYVNYQFRVIAINEVGSSHPSLPSERYRTSGAPPESNPGDVKGEGTRKNNMEITWTPMNATSAFGPNLRYIVKWRRRETREAWNNVTVWGSRYVVGQTPVYVPYEIRVQAENDFGKGPEPESVIGYSGEDYPRAAPTEVKVRVMNSTAISLQWNRVYSDTVQGQLREYRAYYWRESSLLKNLWVSQKRQQASFPGDRLRGVVSRLFPYSNYKLEMVVVNGRGDGPRSETKEFTTPEGVPSAPRRFRVRQPNLETINLEWDHPEHPNGIMIGYTLKYVAFNGTKVGKQIVENFSPNQTKFTVQRTDPVSRYRFTLSARTQVGSGEAVTEESPAPPNEATPTAAPPTLPPTTVGATGAVSSTDATAIAATTEATTVPIIPTVAPTTIATTTTVATTTTTTAAATTTTESPPTTTSGTKIHESAPDEQSIWNVTVLPNSKWANITWKHNFGPGTDFVVEYIDSNHTKKTVPVKAQAQPIQLTDLYPGMTYTLRVYSRDNEGISSTVITFMTSTAYTNNQADIATQGWFIGLMCAIALLVLILLIVCFIKRSRGGKYPVREKKDVPLGPEDPKEEDGSFDYSDEDNKPLQGSQTSLDGTIKQQESDDSLVDYGEGGEGQFNEDGSFIGQYTVKKDKEETEGNESSEATSPVNAIYSLA.

A signal peptide spans 1–24 (MARQPPPPWVHAAFLLCLLSLGGA). Topologically, residues 25-1217 (IEIPMDPSIQ…NQADIATQGW (1193 aa)) are extracellular. Ig-like C2-type domains are found at residues 41 to 137 (PTIT…LQVS), 143 to 230 (PKEN…NPFT), 244 to 332 (PSFM…ISVR), 337 to 424 (PYWL…AFVS), 429 to 517 (PPRM…VRLE), and 521 to 603 (PTRI…QDLA). 4 disulfide bridges follow: C63–C118, C162–C213, C268–C316, and C358–C408. N305 carries an N-linked (GlcNAc...) asparagine glycan. N409 and N446 each carry an N-linked (GlcNAc...) asparagine glycan. 2 cysteine pairs are disulfide-bonded: C452–C501 and C543–C592. Y481 carries the post-translational modification Phosphotyrosine. N483 is a glycosylation site (N-linked (GlcNAc...) asparagine). S485 is modified (phosphoserine). 4 Fibronectin type-III domains span residues 630–725 (RPRD…TSGA), 730–823 (NPGD…SGED), 828–930 (APTE…TPEG), and 934–1030 (APRR…PNEA). Residues 713-740 (PSLPSERYRTSGAPPESNPGDVKGEGTR) are disordered. N752 and N778 each carry an N-linked (GlcNAc...) asparagine glycan. The interval 915 to 934 (GDGPRSETKEFTTPEGVPSA) is disordered. The span at 916 to 926 (DGPRSETKEFT) shows a compositional bias: basic and acidic residues. N-linked (GlcNAc...) asparagine glycans are attached at residues N973 and N988. Disordered regions lie at residues 1011–1040 (TQVGSGEAVTEESPAPPNEATPTAAPPTLP) and 1090–1111 (TTAAATTTTESPPTTTSGTKIH). The span at 1024 to 1040 (PAPPNEATPTAAPPTLP) shows a compositional bias: pro residues. A compositionally biased stretch (low complexity) spans 1090-1105 (TTAAATTTTESPPTTT). The region spanning 1114 to 1206 (APDEQSIWNV…ITFMTSTAYT (93 aa)) is the Fibronectin type-III 5 domain. The helical transmembrane segment at 1218-1238 (FIGLMCAIALLVLILLIVCFI) threads the bilayer. Residues 1239 to 1347 (KRSRGGKYPV…SPVNAIYSLA (109 aa)) are Cytoplasmic-facing. A disordered region spans residues 1248–1347 (VREKKDVPLG…SPVNAIYSLA (100 aa)). Over residues 1261 to 1272 (PKEEDGSFDYSD) the composition is skewed to acidic residues. Phosphoserine occurs at positions 1267, 1281, 1294, 1297, 1333, 1334, and 1338. Positions 1278–1291 (LQGSQTSLDGTIKQ) are enriched in polar residues.

The protein belongs to the immunoglobulin superfamily. L1/neurofascin/NgCAM family. As to quaternary structure, horseshoe-shaped homodimer. Probable constituent of a NFASC/NRCAM/ankyrin-G complex. Associates with the sodium channel beta-1 (SCN1B) and beta-3 (SCN3B) subunits. Interacts with GLDN/gliomedin. Interacts with MYOC.

The protein resides in the cell membrane. The protein localises to the cell junction. Its subcellular location is the paranodal septate junction. Cell adhesion, ankyrin-binding protein which may be involved in neurite extension, axonal guidance, synaptogenesis, myelination and neuron-glial cell interactions. The polypeptide is Neurofascin (NFASC) (Homo sapiens (Human)).